The sequence spans 526 residues: Beta,beta-carotene 15,15'-dioxygenase (526 aa).

Fe cation is bound by residues His172, His236, His307, and His512.

Belongs to the carotenoid oxygenase family. It depends on Fe(2+) as a cofactor.

The protein localises to the cytoplasm. The protein resides in the cytosol. The enzyme catalyses all-trans-beta-carotene + O2 = 2 all-trans-retinal. It participates in cofactor metabolism; retinol metabolism. Symmetrically cleaves beta-carotene into two molecules of retinal using a dioxygenase mechanism. In Gallus gallus (Chicken), this protein is Beta,beta-carotene 15,15'-dioxygenase.